Here is a 230-residue protein sequence, read N- to C-terminus: Potassium/proton antiporter CemA (230 aa).

Helical transmembrane passes span 7–27 (LPSL…SSSF), 107–127 (ILHF…FFLG), 145–165 (LNDS…VGFH), and 181–201 (FGWA…PVIL).

Belongs to the CemA family.

It is found in the plastid. The protein resides in the chloroplast inner membrane. It catalyses the reaction K(+)(in) + H(+)(out) = K(+)(out) + H(+)(in). Contributes to K(+)/H(+) antiport activity by supporting proton efflux to control proton extrusion and homeostasis in chloroplasts in a light-dependent manner to modulate photosynthesis. Prevents excessive induction of non-photochemical quenching (NPQ) under continuous-light conditions. Indirectly promotes efficient inorganic carbon uptake into chloroplasts. This Triticum aestivum (Wheat) protein is Potassium/proton antiporter CemA.